A 374-amino-acid chain; its full sequence is Speckle-type POZ protein A (374 aa).

The 131-residue stretch at lysine 31–valine 161 folds into the MATH domain. The required for nuclear localization stretch occupies residues valine 71 to glycine 191. Residues glutamine 173–leucine 297 enclose the BTB domain. Residues leucine 297–serine 355 are homodimerization.

It belongs to the Tdpoz family. Homodimer. Part of cullin-RING-based BCR (BTB-CUL3-RBX1) E3 ubiquitin-protein ligase complexes that contain CUL3 and SPOP, plus a target protein.

Its subcellular location is the nucleus. It is found in the nucleus speckle. Its pathway is protein modification; protein ubiquitination. Component of a cullin-RING-based BCR (BTB-CUL3-RBX1) E3 ubiquitin-protein ligase complex that mediates the ubiquitination of target proteins, leading most often to their proteasomal degradation. This Xenopus laevis (African clawed frog) protein is Speckle-type POZ protein A (spop-a).